The chain runs to 315 residues: DNA-directed RNA polymerase subunit alpha (315 aa).

The alpha N-terminal domain (alpha-NTD) stretch occupies residues 1–228 (MLEIEKPKIE…EHLRLFIGLT (228 aa)). An alpha C-terminal domain (alpha-CTD) region spans residues 246–315 (DKILEMTIEE…LGLSLRQEDE (70 aa)).

The protein belongs to the RNA polymerase alpha chain family. In terms of assembly, homodimer. The RNAP catalytic core consists of 2 alpha, 1 beta, 1 beta' and 1 omega subunit. When a sigma factor is associated with the core the holoenzyme is formed, which can initiate transcription.

It catalyses the reaction RNA(n) + a ribonucleoside 5'-triphosphate = RNA(n+1) + diphosphate. Functionally, DNA-dependent RNA polymerase catalyzes the transcription of DNA into RNA using the four ribonucleoside triphosphates as substrates. The chain is DNA-directed RNA polymerase subunit alpha from Desulforamulus reducens (strain ATCC BAA-1160 / DSM 100696 / MI-1) (Desulfotomaculum reducens).